Reading from the N-terminus, the 265-residue chain is MPQVTMRQMLEAGVHFGHQTRYWNPKMAPYIFGARGKIHIINLEKTVPLFNDAMNFLSSVAQKRGTVLFLGTKRSARESIKEEAERCNMPFMTQRWLGGTLTNFRTVKQSVARLKELEAAETDGTFDKLVKHEVLGLRREREKLDASLGGIKEMNRLPDAIFVIDIGHEDIAIKEAKKLGIPVIAVVDTNYDPALVDYAIPGNDDAIRAVQLYARAAADAVLEGKAAAPNSASVREEEFSAESADEGKGRRAPAKKGDKKADAAE.

Residues 226-265 are disordered; sequence AAAPNSASVREEEFSAESADEGKGRRAPAKKGDKKADAAE. Residues 245–265 are compositionally biased toward basic and acidic residues; sequence DEGKGRRAPAKKGDKKADAAE.

It belongs to the universal ribosomal protein uS2 family.

This Xanthomonas euvesicatoria pv. vesicatoria (strain 85-10) (Xanthomonas campestris pv. vesicatoria) protein is Small ribosomal subunit protein uS2.